Here is a 298-residue protein sequence, read N- to C-terminus: Ribosomal RNA small subunit methyltransferase A (298 aa).

Asparagine 30, valine 32, glycine 57, glutamate 78, aspartate 108, and asparagine 126 together coordinate S-adenosyl-L-methionine.

Belongs to the class I-like SAM-binding methyltransferase superfamily. rRNA adenine N(6)-methyltransferase family. RsmA subfamily.

It is found in the cytoplasm. It catalyses the reaction adenosine(1518)/adenosine(1519) in 16S rRNA + 4 S-adenosyl-L-methionine = N(6)-dimethyladenosine(1518)/N(6)-dimethyladenosine(1519) in 16S rRNA + 4 S-adenosyl-L-homocysteine + 4 H(+). Specifically dimethylates two adjacent adenosines (A1518 and A1519) in the loop of a conserved hairpin near the 3'-end of 16S rRNA in the 30S particle. May play a critical role in biogenesis of 30S subunits. The sequence is that of Ribosomal RNA small subunit methyltransferase A from Cutibacterium acnes (strain DSM 16379 / KPA171202) (Propionibacterium acnes).